A 220-amino-acid polypeptide reads, in one-letter code: Probable septum site-determining protein MinC (220 aa).

This sequence belongs to the MinC family. Interacts with MinD and FtsZ.

In terms of biological role, cell division inhibitor that blocks the formation of polar Z ring septums. Rapidly oscillates between the poles of the cell to destabilize FtsZ filaments that have formed before they mature into polar Z rings. Prevents FtsZ polymerization. The polypeptide is Probable septum site-determining protein MinC (Vibrio parahaemolyticus serotype O3:K6 (strain RIMD 2210633)).